A 166-amino-acid chain; its full sequence is Putative lipoprotein Lxx21020 (166 aa).

An N-terminal signal peptide occupies residues methionine 1–glycine 22. Cysteine 23 is lipidated: N-palmitoyl cysteine. The S-diacylglycerol cysteine moiety is linked to residue cysteine 23.

Its subcellular location is the cell membrane. The chain is Putative lipoprotein Lxx21020 from Leifsonia xyli subsp. xyli (strain CTCB07).